The primary structure comprises 165 residues: Peptide methionine sulfoxide reductase MsrA (165 aa).

The active site involves Cys10.

The protein belongs to the MsrA Met sulfoxide reductase family.

The catalysed reaction is L-methionyl-[protein] + [thioredoxin]-disulfide + H2O = L-methionyl-(S)-S-oxide-[protein] + [thioredoxin]-dithiol. The enzyme catalyses [thioredoxin]-disulfide + L-methionine + H2O = L-methionine (S)-S-oxide + [thioredoxin]-dithiol. Functionally, has an important function as a repair enzyme for proteins that have been inactivated by oxidation. Catalyzes the reversible oxidation-reduction of methionine sulfoxide in proteins to methionine. The chain is Peptide methionine sulfoxide reductase MsrA from Campylobacter jejuni subsp. jejuni serotype O:6 (strain 81116 / NCTC 11828).